Reading from the N-terminus, the 521-residue chain is Protein nucleotidyltransferase YdiU (521 aa).

Positions 109, 111, 112, 131, 143, 144, 194, and 201 each coordinate ATP. Asp-270 acts as the Proton acceptor in catalysis. Positions 271 and 280 each coordinate Mg(2+). An ATP-binding site is contributed by Asp-280.

Belongs to the SELO family. The cofactor is Mg(2+). It depends on Mn(2+) as a cofactor.

The catalysed reaction is L-seryl-[protein] + ATP = 3-O-(5'-adenylyl)-L-seryl-[protein] + diphosphate. It carries out the reaction L-threonyl-[protein] + ATP = 3-O-(5'-adenylyl)-L-threonyl-[protein] + diphosphate. The enzyme catalyses L-tyrosyl-[protein] + ATP = O-(5'-adenylyl)-L-tyrosyl-[protein] + diphosphate. It catalyses the reaction L-histidyl-[protein] + UTP = N(tele)-(5'-uridylyl)-L-histidyl-[protein] + diphosphate. The catalysed reaction is L-seryl-[protein] + UTP = O-(5'-uridylyl)-L-seryl-[protein] + diphosphate. It carries out the reaction L-tyrosyl-[protein] + UTP = O-(5'-uridylyl)-L-tyrosyl-[protein] + diphosphate. Its function is as follows. Nucleotidyltransferase involved in the post-translational modification of proteins. It can catalyze the addition of adenosine monophosphate (AMP) or uridine monophosphate (UMP) to a protein, resulting in modifications known as AMPylation and UMPylation. In Burkholderia mallei (strain ATCC 23344), this protein is Protein nucleotidyltransferase YdiU.